Reading from the N-terminus, the 218-residue chain is Esterase FPY3 (218 aa).

Active-site charge relay system residues include Ser95, Asp163, and His190.

The protein belongs to the LovG family.

It participates in secondary metabolite biosynthesis. Functionally, esterase; part of the gene cluster that mediates the biosynthesis of the gamma-pyrones fusapyrone (FPY) and deoxyfusapyrone (dFPY). FPY is an undecaketide and thus likely synthesized by the polyketide synthase FPY1 from acetyl-CoA functioning as starter unit and the addition of 10 malonyl-CoA extender units by successive Claisen-condensations. Next to this, FPY shares some rare features: C-glycosylated 4-deoxyglucose at C-3, a gem-dimethyl group at C-13, and an alpha-beta to beta-gamma double bond shift at C-20. During FPY biosynthesis mono-C-methyl groups are transferred to the tetra-, penta-, hexa- and heptaketide, while two C-methyl groups are transferred to the nonaketide, suggesting that the CMet domain is programmed to selectively catalyze two successive C-alpha-methylation reactions of the nonaketide, while other alpha-carbons are non- or mono-methylated only. While the origin of the 4'-deoxyglucose moiety remains opaque, its transfer to C-3 is most likely mediated by the C-glycosyltransferase FPY2. Next to this, the hydroxyl group present at C-33 and discriminating between FPY and dFPY, is likely to be installed by the cytochrome P450 monooxygenase FPY7. No putative function can be predicted for the remaining genes FPY3-FPY6. The chain is Esterase FPY3 from Fusarium mangiferae (Mango malformation disease fungus).